A 241-amino-acid chain; its full sequence is Uridylate kinase (241 aa).

An ATP-binding site is contributed by 12 to 15; it reads KLSG. The tract at residues 20–25 is involved in allosteric activation by GTP; sequence GDKGQG. Gly-54 is a UMP binding site. Residues Gly-55 and Arg-59 each coordinate ATP. UMP contacts are provided by residues Asp-74 and 135-142; that span reads TGSPYFST. ATP contacts are provided by Asn-163, Tyr-169, and Asp-172.

This sequence belongs to the UMP kinase family. As to quaternary structure, homohexamer.

The protein localises to the cytoplasm. The enzyme catalyses UMP + ATP = UDP + ADP. The protein operates within pyrimidine metabolism; CTP biosynthesis via de novo pathway; UDP from UMP (UMPK route): step 1/1. With respect to regulation, allosterically activated by GTP. Inhibited by UTP. Catalyzes the reversible phosphorylation of UMP to UDP. In Leuconostoc mesenteroides subsp. mesenteroides (strain ATCC 8293 / DSM 20343 / BCRC 11652 / CCM 1803 / JCM 6124 / NCDO 523 / NBRC 100496 / NCIMB 8023 / NCTC 12954 / NRRL B-1118 / 37Y), this protein is Uridylate kinase.